We begin with the raw amino-acid sequence, 475 residues long: Chromosomal replication initiator protein DnaA (475 aa).

Residues 1–73 (MSDTEQERWS…LSCWQAELPD (73 aa)) are domain I, interacts with DnaA modulators. Residues 73–131 (DVHRIDLTVRSAMRCAAPVREAPATDARHPERSEGRNGVELKTVATAPASANHDALGGS) are domain II. Positions 132 to 354 (PLDPRLTFQS…GAINRLLAHS (223 aa)) are domain III, AAA+ region. Residues G179, G181, K182, and T183 each coordinate ATP. A domain IV, binds dsDNA region spans residues 355–475 (KLNAQPVTLE…VELLKRQLQE (121 aa)).

It belongs to the DnaA family. Oligomerizes as a right-handed, spiral filament on DNA at oriC.

It is found in the cytoplasm. Plays an essential role in the initiation and regulation of chromosomal replication. ATP-DnaA binds to the origin of replication (oriC) to initiate formation of the DNA replication initiation complex once per cell cycle. Binds the DnaA box (a 9 base pair repeat at the origin) and separates the double-stranded (ds)DNA. Forms a right-handed helical filament on oriC DNA; dsDNA binds to the exterior of the filament while single-stranded (ss)DNA is stabiized in the filament's interior. The ATP-DnaA-oriC complex binds and stabilizes one strand of the AT-rich DNA unwinding element (DUE), permitting loading of DNA polymerase. After initiation quickly degrades to an ADP-DnaA complex that is not apt for DNA replication. Binds acidic phospholipids. The polypeptide is Chromosomal replication initiator protein DnaA (Nitrobacter winogradskyi (strain ATCC 25391 / DSM 10237 / CIP 104748 / NCIMB 11846 / Nb-255)).